The chain runs to 188 residues: Elongation factor P (188 aa).

Lys34 carries the N6-(3,6-diaminohexanoyl)-5-hydroxylysine modification.

The protein belongs to the elongation factor P family. May be beta-lysylated on the epsilon-amino group of Lys-34 by the combined action of EpmA and EpmB, and then hydroxylated on the C5 position of the same residue by EpmC (if this protein is present). Lysylation is critical for the stimulatory effect of EF-P on peptide-bond formation. The lysylation moiety may extend toward the peptidyltransferase center and stabilize the terminal 3-CCA end of the tRNA. Hydroxylation of the C5 position on Lys-34 may allow additional potential stabilizing hydrogen-bond interactions with the P-tRNA.

Its subcellular location is the cytoplasm. It functions in the pathway protein biosynthesis; polypeptide chain elongation. In terms of biological role, involved in peptide bond synthesis. Alleviates ribosome stalling that occurs when 3 or more consecutive Pro residues or the sequence PPG is present in a protein, possibly by augmenting the peptidyl transferase activity of the ribosome. Modification of Lys-34 is required for alleviation. The sequence is that of Elongation factor P from Pseudoalteromonas translucida (strain TAC 125).